A 162-amino-acid chain; its full sequence is Interleukin-15 (162 aa).

The first 29 residues, 1-29, serve as a signal peptide directing secretion; the sequence is MRISKPHLRSISIQCYLCLLLKSHFLTEA. Residues 30–48 constitute a propeptide that is removed on maturation; sequence GIHVFILGCFSAGLPKTEA. Intrachain disulfides connect Cys83-Cys133 and Cys90-Cys136. Asn127 is a glycosylation site (N-linked (GlcNAc...) asparagine).

This sequence belongs to the IL-15/IL-21 family.

Its subcellular location is the secreted. In terms of biological role, cytokine that plays a major role in the development of inflammatory and protective immune responses to microbial invaders and parasites by modulating immune cells of both the innate and adaptive immune systems. Stimulates the proliferation of natural killer cells, T-cells and B-cells and promotes the secretion of several cytokines. In monocytes, induces the production of IL8 and monocyte chemotactic protein 1/CCL2, two chemokines that attract neutrophils and monocytes respectively to sites of infection. Unlike most cytokines, which are secreted in soluble form, IL15 is expressed in association with its high affinity IL15RA on the surface of IL15-producing cells and delivers signals to target cells that express IL2RB and IL2RG receptor subunits. Binding to its receptor triggers the phosphorylation of JAK1 and JAK3 and the recruitment and subsequent phosphorylation of signal transducer and activator of transcription-3/STAT3 and STAT5. In mast cells, induces the rapid tyrosine phosphorylation of STAT6 and thereby controls mast cell survival and release of cytokines such as IL4. This is Interleukin-15 (IL15) from Chlorocebus aethiops (Green monkey).